A 445-amino-acid polypeptide reads, in one-letter code: MSNRKYFGTDGIRGRVGDAPITPDFVLKLGWAAGKVLARHGSRKIIIGKDTRISGYMLESALEAGLAAAGLSASFTGPMPTPAVAYLTRTFRAEAGIVISASHNPFYDNGIKFFSIDGTKLPDEVEEAIEAEMEKEITCVDSSELGKASRIVDAAGRYIEFCKGTFPNELSLNELKIVVDCANGATYHIAPNVLRELGANVIAIGCEPNGVNINEEVGATDVRALQARVIAEKADLGIALDGDGDRVIMVDHEGNKVDGDQIMYIIAREGLRQGQLRGGAVGTLMSNMGLELALKQLGIPFARAKVGDRYVLEKLQEKGWRIGAENSGHVILLDKTTTGDGIVAGLQVLAAMVRNHMSLHDLCSGMKMFPQILVNVRYAAGSGDPLENDNVKAVTAEVEAALGNRGRVLLRKSGTEPLIRVMVEGEDEAQVTEFAHRIADAVKAV.

Residue serine 102 is the Phosphoserine intermediate of the active site. The Mg(2+) site is built by serine 102, aspartate 241, aspartate 243, and aspartate 245. Phosphoserine is present on serine 102.

It belongs to the phosphohexose mutase family. It depends on Mg(2+) as a cofactor. Activated by phosphorylation.

The catalysed reaction is alpha-D-glucosamine 1-phosphate = D-glucosamine 6-phosphate. Its function is as follows. Catalyzes the conversion of glucosamine-6-phosphate to glucosamine-1-phosphate. In Citrobacter koseri (strain ATCC BAA-895 / CDC 4225-83 / SGSC4696), this protein is Phosphoglucosamine mutase.